The sequence spans 311 residues: Terpentetriene synthase (311 aa).

Positions 77–81 match the DDXXD motif motif; sequence DDRWD.

It belongs to the terpene synthase family. As to quaternary structure, homodimer. Mg(2+) serves as cofactor.

It carries out the reaction terpentedienyl diphosphate = terpentetriene + diphosphate. Its pathway is antibiotic biosynthesis. Its function is as follows. Involved in the production of the isoprenoid antibiotic terpentecin. Converts terpentedienol diphosphate (TDP) into terpentetriene (TTE). Can also accept geranylgeranyl diphosphate (GGDP) and farnesyl diphosphate (FDP) as substrates. The sequence is that of Terpentetriene synthase (cyc2) from Kitasatospora griseola (Streptomyces griseolosporeus).